The following is a 233-amino-acid chain: Probable fimbrial chaperone protein ElfD (233 aa).

Positions 1–26 are cleaved as a signal peptide; it reads MKTCITKGIVTVSLTAILLSCSSAWA.

The protein belongs to the periplasmic pilus chaperone family.

It is found in the periplasm. Part of the elfADCG-ycbUVF fimbrial operon, which promotes adhesion of bacteria to different abiotic surfaces. Could be required for the biogenesis of the ElfA fimbriae. The protein is Probable fimbrial chaperone protein ElfD (elfD) of Escherichia coli (strain K12).